Here is a 151-residue protein sequence, read N- to C-terminus: Ribonuclease P protein component (151 aa).

The tract at residues 1–62 is disordered; the sequence is MDEKDLATQP…LKGDSAFRRL (62 aa). Residues 28–48 show a composition bias toward low complexity; sequence GAQGAEAQAAEGPLAAHAQGA.

It belongs to the RnpA family. Consists of a catalytic RNA component (M1 or rnpB) and a protein subunit.

It carries out the reaction Endonucleolytic cleavage of RNA, removing 5'-extranucleotides from tRNA precursor.. Its function is as follows. RNaseP catalyzes the removal of the 5'-leader sequence from pre-tRNA to produce the mature 5'-terminus. It can also cleave other RNA substrates such as 4.5S RNA. The protein component plays an auxiliary but essential role in vivo by binding to the 5'-leader sequence and broadening the substrate specificity of the ribozyme. The polypeptide is Ribonuclease P protein component (Thermus oshimai).